A 202-amino-acid polypeptide reads, in one-letter code: UPF0102 protein Dde_1093 (202 aa).

It belongs to the UPF0102 family.

The sequence is that of UPF0102 protein Dde_1093 from Oleidesulfovibrio alaskensis (strain ATCC BAA-1058 / DSM 17464 / G20) (Desulfovibrio alaskensis).